The primary structure comprises 463 residues: ATP synthase subunit beta (463 aa).

Position 151 to 158 (151 to 158 (GGAGVGKT)) interacts with ATP.

This sequence belongs to the ATPase alpha/beta chains family. In terms of assembly, F-type ATPases have 2 components, CF(1) - the catalytic core - and CF(0) - the membrane proton channel. CF(1) has five subunits: alpha(3), beta(3), gamma(1), delta(1), epsilon(1). CF(0) has three main subunits: a(1), b(2) and c(9-12). The alpha and beta chains form an alternating ring which encloses part of the gamma chain. CF(1) is attached to CF(0) by a central stalk formed by the gamma and epsilon chains, while a peripheral stalk is formed by the delta and b chains.

The protein localises to the cell membrane. The catalysed reaction is ATP + H2O + 4 H(+)(in) = ADP + phosphate + 5 H(+)(out). In terms of biological role, produces ATP from ADP in the presence of a proton gradient across the membrane. The catalytic sites are hosted primarily by the beta subunits. The protein is ATP synthase subunit beta of Clostridium botulinum (strain ATCC 19397 / Type A).